A 313-amino-acid polypeptide reads, in one-letter code: Protein FixB (313 aa).

An FAD-binding site is contributed by 255–283; it reads LYLAVGISGQIQHMVGANASQTIFAINKD.

This sequence belongs to the ETF alpha-subunit/FixB family. In terms of assembly, heterodimer of FixA and FixB.

Its pathway is amine and polyamine metabolism; carnitine metabolism. Required for anaerobic carnitine reduction. May bring reductant to CaiA. This Escherichia coli (strain SMS-3-5 / SECEC) protein is Protein FixB.